Reading from the N-terminus, the 442-residue chain is DDB1- and CUL4-associated factor 12-B (442 aa).

Residues Met1–Thr13 are compositionally biased toward basic residues. Positions Met1–Arg31 are disordered. WD repeat units follow at residues Ser132 to Val173, Gly177 to Arg215, Pro245 to Leu284, and Glu333 to Asp370.

This sequence belongs to the WD repeat DCAF12 family. In terms of assembly, component of the DCX(DCAF12) E3 ubiquitin ligase complex, at least composed of cul4 (cul4a or cul4b), ddb1, dcaf12 and rbx1.

It is found in the cytoplasm. The protein resides in the cytoskeleton. It localises to the microtubule organizing center. Its subcellular location is the centrosome. The protein localises to the nucleus. The protein operates within protein modification; protein ubiquitination. Substrate-recognition component of a DCX (DDB1-CUL4-X-box) E3 ubiquitin-protein ligase complex of the DesCEND (destruction via C-end degrons) pathway, which recognizes a C-degron located at the extreme C terminus of target proteins, leading to their ubiquitination and degradation. The C-degron recognized by the DesCEND pathway is usually a motif of less than ten residues and can be present in full-length proteins, truncated proteins or proteolytically cleaved forms. The DCX(DCAF12) complex specifically recognizes proteins with a diglutamate (Glu-Glu) at the C-terminus leading to their ubiquitination and degradation. Also directly recognizes the C-terminal glutamate-leucine (Glu-Leu) degron as an alternative degron in proteins leading to their ubiquitination and degradation. This Xenopus laevis (African clawed frog) protein is DDB1- and CUL4-associated factor 12-B (dcaf12-b).